Here is a 424-residue protein sequence, read N- to C-terminus: Cysteate synthase (424 aa).

Position 106 is an N6-(pyridoxal phosphate)lysine (Lys106). Positions 132 and 381 each coordinate pyridoxal 5'-phosphate.

This sequence belongs to the threonine synthase family. Cysteate synthase subfamily. In terms of assembly, homotrimer. Requires pyridoxal 5'-phosphate as cofactor.

The catalysed reaction is O-phospho-L-serine + sulfite + H(+) = L-cysteate + phosphate. It functions in the pathway cofactor biosynthesis; coenzyme M biosynthesis. Specifically catalyzes the beta-elimination of phosphate from L-phosphoserine and the beta-addition of sulfite to the dehydroalanine intermediate to produce L-cysteate. This Methanoregula boonei (strain DSM 21154 / JCM 14090 / 6A8) protein is Cysteate synthase.